The sequence spans 1593 residues: MSLFSCLLLWTLWAACSHGAMDECIDEDDRPQRCMPEFVNAAFNATVVATNTCGSPPEEFCVQTGVTGVTKSCHICNAADPRLHHGAVYLTDYNQPVQPTWWQSQTMLAGIQYPNSINLTLHLGKSFDITYVRLKFHTSRPESFAIYKRSSEDGPWTPYQYYSGSCEKTYSKNNRGFIRTGEDEQQALCTDEFSDISPLYGGNVAFSTLEGRPSAYNFDNSPVLQDWVTATDIRVTLNRLNTFGDEVFNDPKVLKSYYYAISDFAVGGRCKCNGHASECVKNEYSKLVCNCKHNTEGADCNVCKPFYNDRPWRRATAENPNECLPCNCNGKSAECYFDPELYRATGHGGHCRNCADNTDGPKCERCLANYYREASGQRCLSCGCNPVGSLSTQCDNTGRCSCKPGVMGDKCDRCQPGYHSLSEAGCRPCSCNPAGSTQECDVQTGRCQCKENVDGFNCDRCKLGYFNLDPQNPQGCTPCFCFQHSTVCESADGYSVHKITSTFDRDDEGWKGKQRDDSSVPVQWSPSSGEISLISEDYFPIYFVAPDKFLHNQLLSYGQNLTLNFRIQRHDARLSAEDVVLEGSGLRVAVPLIAQGNSYPGEETQTFVFRLHDTTDYPWRPTIKHADFQKLLYNLTSIMIRGTYSAQSAGYLDNVSLVTARRGPGTPARWVEKCTCPQGYLGQHCEQCDQGFRRSRPELRRFSTCERCNCNGHSDTCDPETGMCNCQHNTAGLSCERCKDGFYGDSTVGSSSDCKACPCPAGATCAVVPKTNEVVCTNCPTGTTGKRCELCDDGFFGDPLGEKGPVRACRACSCNNNIDPNAVGNCNRESGECLKCIYNTAGVFCDRCKQGFYGDARAANVADKCKPCKCSPYGTVDRQTACSQVTGQCPCLPHVINRDCGACELGFYNLQSGKGCERCNCNPIGSTNGQCDIVSGQCECQPGVTGQHCERCEVNFFGFSSSGCKPCDCDPEGSESAQCKEDGRCHCRPGFVGSRCDMCEENYFYNRSTPGCQQCPNCYSLVRDKVNQQRQKLLDLQNLIDSLDNTETTVSDKAFEDRLKEAEKTIMDLLEEAQASKEVDKGLLDRLNNINKTLNNQWNRLQNIKNTVDNTGAQADRARNRVRDAENLINTAREELDKAKEAISKVDIKIPTTSGDPNNMTLLAEEARKLSEKHKADADQIEKIAKDANDTSTKAYNMLKKALDGENKTSSDIDELNRKYLEAKDLAKNLEKQAAKVHAEAEEAGNKALKIYANLTSLPPINTKTLEDDANKIKKEASDLDKLIDKTEKEYNDLREDLRGKETEVRKLLDKGKTEQQTADQLLARADAAKALAEEAAKKGKSTFQEAQDILNNLRDFDKRVNDNKTAAEDAMRRIPQINATINEANDKTRRAEAALGNAAADAKDAKAKAEEAEKIANDVQKGSAKTKADAEKAFEDTMKLDKDVDKMMDQLTAAEKELEKKKAEADTDMMMASMASDNAKDAEGNARKAKSAVREVLNTINALLGQLGNIDKVDLSKLNQIDNALKDAKDKMAGSELDRKLKELNDIAKSQEDMISDYDRQIQEIRADIANLNDIKNTLPEGCFNTPSLERP.

A signal peptide spans 1 to 19 (MSLFSCLLLWTLWAACSHG). In terms of domain architecture, Laminin N-terminal spans 30–269 (RPQRCMPEFV…AISDFAVGGR (240 aa)). 2 N-linked (GlcNAc...) asparagine glycosylation sites follow: N44 and N118. Cystine bridges form between C270-C279, C272-C289, C291-C300, C303-C323, C326-C335, C328-C351, C354-C363, C366-C379, C382-C394, C384-C400, C402-C411, C414-C426, C429-C440, C431-C447, C449-C458, and C461-C476. Laminin EGF-like domains are found at residues 270-325 (CKCN…ECLP), 326-381 (CNCN…RCLS), 382-428 (CGCN…GCRP), and 429-478 (CSCN…GCTP). One can recognise a Laminin IV type A domain in the interval 505-673 (RDDEGWKGKQ…PGTPARWVEK (169 aa)). N-linked (GlcNAc...) asparagine glycosylation is found at N560, N634, and N654. Intrachain disulfides connect C708–C717, C710–C724, C726–C735, C738–C754, C757–C765, C759–C776, C779–C788, C791–C809, C812–C826, C814–C833, C836–C845, C848–C865, C868–C882, C870–C889, C891–C900, C903–C916, C919–C931, C921–C938, C940–C949, C952–C964, C967–C979, C969–C985, C987–C996, and C999–C1012. Laminin EGF-like domains are found at residues 708 to 756 (CNCN…DCKA), 757 to 811 (CPCP…ACRA), 812 to 867 (CSCN…KCKP), 868 to 918 (CKCS…GCER), 919 to 966 (CNCN…GCKP), and 967 to 1014 (CDCD…GCQQ). Residues N1006, N1091, N1159, N1189, N1207, N1254, N1364, and N1379 are each glycosylated (N-linked (GlcNAc...) asparagine). Residues 1014 to 1593 (QCPNCYSLVR…CFNTPSLERP (580 aa)) form a domain II and I region. Residues 1021–1580 (LVRDKVNQQR…ANLNDIKNTL (560 aa)) are a coiled coil.

Laminin is a complex glycoprotein, consisting of three different polypeptide chains (alpha, beta, gamma), which are bound to each other by disulfide bonds into a cross-shaped molecule comprising one long and three short arms with globules at each end.

It is found in the secreted. Its subcellular location is the extracellular space. The protein localises to the extracellular matrix. It localises to the basement membrane. Its function is as follows. Binding to cells via a high affinity receptor, laminin is thought to mediate the attachment, migration and organization of cells into tissues during embryonic development by interacting with other extracellular matrix components. The chain is Laminin subunit gamma-1 (lamc1) from Danio rerio (Zebrafish).